The sequence spans 318 residues: Aquaporin-1 (318 aa).

The span at 1 to 16 shows a compositional bias: polar residues; it reads MVQFGSRANTNMTGLP. The segment at 1-27 is disordered; it reads MVQFGSRANTNMTGLPTEQAVEDRRVG. The Cytoplasmic portion of the chain corresponds to 1–36; the sequence is MVQFGSRANTNMTGLPTEQAVEDRRVGNPKRDRMRN. A helical transmembrane segment spans residues 37–57; it reads ALVIVLGEFCGTFMFLLLSFI. The Extracellular segment spans residues 58–77; it reads GAQTALVTNSPSDAGSPLLP. Residues 78-98 form a helical membrane-spanning segment; the sequence is FSLMYIAASFGTALAVNVWIF. At 99–108 the chain is on the cytoplasmic side; sequence YRVSGGMFNP. The NPA 1 motif lies at 107 to 109; it reads NPA. The chain crosses the membrane as a helical span at residues 109 to 129; that stretch reads AVTLGLVLVGAVTPIHALLII. Topologically, residues 130 to 165 are extracellular; it reads PTQLVAAITAAGITDALLPGKLLVTNALGNGTSVAQ. Residue asparagine 159 is glycosylated (N-linked (GlcNAc...) asparagine). Residues 166–186 traverse the membrane as a helical segment; sequence GVFIEMFLTSQLVLTVYFLAV. Over 187–193 the chain is Cytoplasmic; it reads EKHRSTH. Residues 194–214 form a helical membrane-spanning segment; it reads LAPIGIGISVFIAHICATNWT. Residues 215–236 are Extracellular-facing; the sequence is GTSINPARSFGPSVVAGFHGYD. The NPA 2 signature appears at 219 to 221; sequence NPA. The helical transmembrane segment at 237 to 257 threads the bilayer; that stretch reads WIYYIGPFMGSLLAFGCYKIF. The Cytoplasmic portion of the chain corresponds to 258 to 318; that stretch reads KVLEYQTANP…NDSVIDDQMV (61 aa). Residues 268 to 318 are disordered; it reads GQDDDNLDRSGHHHFFGHRKEPMPHTHTDNIEPKDHGVPQRNDSVIDDQMV. Residues 285–305 are compositionally biased toward basic and acidic residues; it reads HRKEPMPHTHTDNIEPKDHGV.

Belongs to the MIP/aquaporin (TC 1.A.8) family.

Its subcellular location is the nucleus membrane. It carries out the reaction H2O(in) = H2O(out). Probable water channel involved in responses to changes in environmental conditions and conidiation. Involved in responses to hyperosmotic conditions, oxidative stress and cell wall destabilization. Also required for proper transcriptional activation of genes involved in aurofusarin biosynthesis. Not involved in pathogenicity, but negatively regulates deoxynivalenol (DON) production. This chain is Aquaporin-1, found in Gibberella zeae (strain ATCC MYA-4620 / CBS 123657 / FGSC 9075 / NRRL 31084 / PH-1) (Wheat head blight fungus).